The sequence spans 877 residues: Probable linoleate 9S-lipoxygenase 4 (877 aa).

One can recognise a PLAT domain in the interval 38-165 (GDFHASLLDG…NYQYERVFFA (128 aa)). The Lipoxygenase domain maps to 168 to 877 (TYLPSKMPAP…AMGIPNSISI (710 aa)). The interval 229–252 (GSQELPYPRRGRTGRAPTKTDPNT) is disordered. H528, H533, H719, N723, and I877 together coordinate Fe cation.

This sequence belongs to the lipoxygenase family. The cofactor is Fe cation.

The catalysed reaction is (9Z,12Z)-octadecadienoate + O2 = (9S)-hydroperoxy-(10E,12Z)-octadecadienoate. It participates in lipid metabolism; oxylipin biosynthesis. Functionally, plant lipoxygenase may be involved in a number of diverse aspects of plant physiology including growth and development, pest resistance, and senescence or responses to wounding. Catalyzes the hydroperoxidation of lipids containing a cis,cis-1,4-pentadiene structure. This is Probable linoleate 9S-lipoxygenase 4 from Oryza sativa subsp. japonica (Rice).